Consider the following 571-residue polypeptide: Kinesin light chain (571 aa).

Positions 54–160 form a coiled coil; that stretch reads LLTSMKTIRK…KKHLEFMNEM (107 aa). Residues 167–177 are compositionally biased toward basic and acidic residues; that stretch reads EAQVNEEKESE. Residues 167–210 are disordered; it reads EAQVNEEKESEQSSLDLGFPDDDDDGGQPEVLSPTQPSAMAQAA. TPR repeat units follow at residues 220–253, 262–295, 304–337, 346–379, 388–421, and 471–504; these read LRTL…LEKT, ATML…REKT, AATL…REKV, AKQL…YQKE, AKTK…AHEK, and TTTL…RKSA. The tract at residues 518-571 is disordered; sequence GSDFSKGQSPKDRKRSNSRDRNRRDSMDSVSYEKSGDGDEHEKSKLHVGTSHKQ. Composition is skewed to basic and acidic residues over residues 526–544 and 551–562; these read SPKD…RDSM and KSGDGDEHEKSK.

The protein belongs to the kinesin light chain family. In terms of assembly, oligomeric complex composed of two heavy chains and two light chains.

Its subcellular location is the cytoplasm. The protein resides in the cytoskeleton. In terms of biological role, kinesin is a microtubule-associated force-producing protein that may play a role in organelle transport. The light chain may function in coupling of cargo to the heavy chain or in the modulation of its ATPase activity. This is Kinesin light chain from Doryteuthis pealeii (Longfin inshore squid).